A 147-amino-acid polypeptide reads, in one-letter code: Immunity protein YxxD (147 aa).

In terms of assembly, probably interacts with cognate toxin YxiD but not with other non-cognate toxins. The interaction inhibits the toxic activity of YxiD.

It localises to the cytoplasm. Its function is as follows. Immunity component of one of 6 LXG toxin-immunity modules in this strain. They promote kin selection, mediate competition in biofilms, and drive spatial segregation of different strains, indicating that LXG toxins may help avoid warfare between strains in biofilms. Mediates intercellular competition during biofilm formation; disruption of the operon disadvantages the bacteria, but overexpression of the cognate immunity protein restores growth in competition with wild-type. In situ neutralizes the toxic effect of cognate toxin YxiD. Neutralizes the toxic activity of cognate toxin YxiD upon expression in E.coli. Does not have immunity protein activity on other LXG toxins. This chain is Immunity protein YxxD (yxxD), found in Bacillus subtilis (strain 168).